Reading from the N-terminus, the 182-residue chain is UPF0397 protein BCAH820_2657 (182 aa).

5 consecutive transmembrane segments (helical) span residues 9–29 (VVAIGIGSALYGILGLWGFTI), 40–60 (AILTVFGALFGPVAGLLIGLI), 71–91 (WGIWWGWVISSGIIGFTMGFI), 114–134 (ITGLIGIVIAIIFAGAFDIIV), and 142–162 (IVIQVLGATIADVIVFLVLGL).

The protein belongs to the UPF0397 family.

The protein localises to the cell membrane. This is UPF0397 protein BCAH820_2657 from Bacillus cereus (strain AH820).